The chain runs to 101 residues: Large ribosomal subunit protein bL27 (101 aa).

Residues 1 to 21 form a disordered region; sequence MAHKKAGGSSRNGRDSRSKRL.

The protein belongs to the bacterial ribosomal protein bL27 family.

This is Large ribosomal subunit protein bL27 from Buchnera aphidicola subsp. Cinara cedri (strain Cc).